The following is a 279-amino-acid chain: MSYTDTVLSSLKLGQKTEYTGEYDPTLLQAVPRKLNRDHLGITEQQPFNQGADVWTCYEVSWLNLNGLPQVAIAEVVIDANSENLIESKSFKLYLNSVNQTTFESLEQVEYIIESDLSRCACGLVWVKIHKLSEYKNEIIADFSGECIDEQDIEIDNYQYSAQYLEHSAEGEEVEETLVSHLLKSNCLITSQPDWGSVQIHYVGKKINREKLLRYLVSFREHNEFHEQCVERIFTDLMTFAKPEKLMVYARYTRRGGLEINPFRANFDAMPQHIRMARQ.

86-88 (IES) lines the substrate pocket. Position 88 to 89 (88 to 89 (SK)) interacts with NADPH. Catalysis depends on cysteine 187, which acts as the Thioimide intermediate. Catalysis depends on aspartate 194, which acts as the Proton donor. 226-227 (HE) provides a ligand contact to substrate. Residue 255 to 256 (RG) participates in NADPH binding.

It belongs to the GTP cyclohydrolase I family. QueF type 2 subfamily. As to quaternary structure, homodimer.

The protein localises to the cytoplasm. It catalyses the reaction 7-aminomethyl-7-carbaguanine + 2 NADP(+) = 7-cyano-7-deazaguanine + 2 NADPH + 3 H(+). It functions in the pathway tRNA modification; tRNA-queuosine biosynthesis. Functionally, catalyzes the NADPH-dependent reduction of 7-cyano-7-deazaguanine (preQ0) to 7-aminomethyl-7-deazaguanine (preQ1). This chain is NADPH-dependent 7-cyano-7-deazaguanine reductase, found in Haemophilus ducreyi (strain 35000HP / ATCC 700724).